A 169-amino-acid chain; its full sequence is 6,7-dimethyl-8-ribityllumazine synthase (169 aa).

Residues tryptophan 27, 61-63, and 90-92 each bind 5-amino-6-(D-ribitylamino)uracil; these read SYE and VLI. Position 95–96 (95–96) interacts with (2S)-2-hydroxy-3-oxobutyl phosphate; that stretch reads ST. Histidine 98 acts as the Proton donor in catalysis. Phenylalanine 123 is a 5-amino-6-(D-ribitylamino)uracil binding site. Arginine 137 contributes to the (2S)-2-hydroxy-3-oxobutyl phosphate binding site.

It belongs to the DMRL synthase family. In terms of assembly, homopentamer.

The protein resides in the mitochondrion intermembrane space. It catalyses the reaction (2S)-2-hydroxy-3-oxobutyl phosphate + 5-amino-6-(D-ribitylamino)uracil = 6,7-dimethyl-8-(1-D-ribityl)lumazine + phosphate + 2 H2O + H(+). The protein operates within cofactor biosynthesis; riboflavin biosynthesis; riboflavin from 2-hydroxy-3-oxobutyl phosphate and 5-amino-6-(D-ribitylamino)uracil: step 1/2. Functionally, catalyzes the formation of 6,7-dimethyl-8-ribityllumazine by condensation of 5-amino-6-(D-ribitylamino)uracil with 3,4-dihydroxy-2-butanone 4-phosphate. This is the penultimate step in the biosynthesis of riboflavin. This is 6,7-dimethyl-8-ribityllumazine synthase (RIB4) from Saccharomyces cerevisiae (strain ATCC 204508 / S288c) (Baker's yeast).